We begin with the raw amino-acid sequence, 118 residues long: MTHMHITSWVIALILVFVAYGLYSSGNSKGAKITHMILRLFYIIVIITGAQLFLKFTAWNGEYIAKALLGLITIGFMEMLLIRRKNGKAATGIWIGFIVVLLLTVVLGLRLPLGFKVF.

Transmembrane regions (helical) follow at residues 6–26 (ITSW…YSSG), 33–53 (ITHM…AQLF), 62–82 (EYIA…MLLI), and 89–109 (AATG…VLGL).

This sequence belongs to the UPF0344 family.

The protein resides in the cell membrane. This Bacillus licheniformis (strain ATCC 14580 / DSM 13 / JCM 2505 / CCUG 7422 / NBRC 12200 / NCIMB 9375 / NCTC 10341 / NRRL NRS-1264 / Gibson 46) protein is UPF0344 protein BLi01172/BL01343.